The primary structure comprises 264 residues: tRNA (guanine-N(1)-)-methyltransferase (264 aa).

S-adenosyl-L-methionine contacts are provided by residues Gly-125 and 145-150; that span reads LGDFVL.

This sequence belongs to the RNA methyltransferase TrmD family. As to quaternary structure, homodimer.

It localises to the cytoplasm. The enzyme catalyses guanosine(37) in tRNA + S-adenosyl-L-methionine = N(1)-methylguanosine(37) in tRNA + S-adenosyl-L-homocysteine + H(+). Its function is as follows. Specifically methylates guanosine-37 in various tRNAs. This chain is tRNA (guanine-N(1)-)-methyltransferase, found in Burkholderia lata (strain ATCC 17760 / DSM 23089 / LMG 22485 / NCIMB 9086 / R18194 / 383).